The primary structure comprises 89 residues: Small ribosomal subunit protein uS15 (89 aa).

It belongs to the universal ribosomal protein uS15 family. As to quaternary structure, part of the 30S ribosomal subunit. Forms a bridge to the 50S subunit in the 70S ribosome, contacting the 23S rRNA.

One of the primary rRNA binding proteins, it binds directly to 16S rRNA where it helps nucleate assembly of the platform of the 30S subunit by binding and bridging several RNA helices of the 16S rRNA. In terms of biological role, forms an intersubunit bridge (bridge B4) with the 23S rRNA of the 50S subunit in the ribosome. The protein is Small ribosomal subunit protein uS15 of Desulfosudis oleivorans (strain DSM 6200 / JCM 39069 / Hxd3) (Desulfococcus oleovorans).